A 651-amino-acid polypeptide reads, in one-letter code: Cytoplasmic tyrosine-protein kinase BMX (651 aa).

One can recognise a PH domain in the interval 4 to 111; the sequence is KSILEELLLK…WLKALQKEIR (108 aa). The Btk-type zinc finger occupies 113-149; it reads NPHLLIKYHSGFFVDGKFLCCQQSCKAAPGCTLWEAY. Zn(2+) is bound by residues histidine 121, cysteine 132, cysteine 133, and cysteine 143. In terms of domain architecture, SH2 spans 272-368; sequence WFAGNISRSQ…GMITRLRHPV (97 aa). The region spanning 393–646 is the Protein kinase domain; it reads ITLLKELGNG…QLLSAIEPLR (254 aa). Residues 399–407 and lysine 421 each bind ATP; that span reads LGNGQFGVV. Residue aspartate 512 is the Proton acceptor of the active site. At tyrosine 542 the chain carries Phosphotyrosine; by SRC and autocatalysis.

Belongs to the protein kinase superfamily. Tyr protein kinase family. TEC subfamily. In terms of assembly, interacts with BCAR1, CAV1, MYD88, PTK2/FAK1, RUFY1, RUFY2, STAT3, TIRAP and TNFRSF1B. The cofactor is Zn(2+). Post-translationally, phosphorylated in response to protein I/II and to LPS. Phosphorylation at Tyr-542 by SRC and by autocatalysis leads to activation and is required for STAT3 phosphorylation by BMX. In terms of tissue distribution, specifically expressed in the endocardium of the developing heart as well as in the endocardium of the left ventricle and in the endothelium of large arteries in adult mice.

It is found in the cytoplasm. It carries out the reaction L-tyrosyl-[protein] + ATP = O-phospho-L-tyrosyl-[protein] + ADP + H(+). Its activity is regulated as follows. TEK and vascular endothelial growth factor receptor 1 (FLT1) stimulate BMX tyrosine kinase activity. Activated by integrins through the mediation of PTK2/FAK1. Activated by TNF through the mediation of TNFRSF1B. Non-receptor tyrosine kinase that plays central but diverse modulatory roles in various signaling processes involved in the regulation of actin reorganization, cell migration, cell proliferation and survival, cell adhesion, and apoptosis. Participates in signal transduction stimulated by growth factor receptors, cytokine receptors, G-protein coupled receptors, antigen receptors and integrins. Induces tyrosine phosphorylation of BCAR1 in response to integrin regulation. Activation of BMX by integrins is mediated by PTK2/FAK1, a key mediator of integrin signaling events leading to the regulation of actin cytoskeleton and cell motility. Plays a critical role in TNF-induced angiogenesis, and implicated in the signaling of TEK and FLT1 receptors, 2 important receptor families essential for angiogenesis. Required for the phosphorylation and activation of STAT3, a transcription factor involved in cell differentiation. Also involved in interleukin-6 (IL6) induced differentiation. Also plays a role in programming adaptive cytoprotection against extracellular stress in different cell systems, salivary epithelial cells, brain endothelial cells, and dermal fibroblasts. May be involved in regulation of endocytosis through its interaction with an endosomal protein RUFY1. May also play a role in the growth and differentiation of hematopoietic cells; as well as in signal transduction in endocardial and arterial endothelial cells. In Mus musculus (Mouse), this protein is Cytoplasmic tyrosine-protein kinase BMX (Bmx).